Consider the following 401-residue polypeptide: Chorismate synthase (401 aa).

NADP(+) contacts are provided by Arg40 and Arg46. Residues 135–137, 256–257, Gly300, 315–319, and Arg341 contribute to the FMN site; these read RAS, QA, and KPIST.

Belongs to the chorismate synthase family. As to quaternary structure, homotetramer. FMNH2 serves as cofactor.

The catalysed reaction is 5-O-(1-carboxyvinyl)-3-phosphoshikimate = chorismate + phosphate. It functions in the pathway metabolic intermediate biosynthesis; chorismate biosynthesis; chorismate from D-erythrose 4-phosphate and phosphoenolpyruvate: step 7/7. Its function is as follows. Catalyzes the anti-1,4-elimination of the C-3 phosphate and the C-6 proR hydrogen from 5-enolpyruvylshikimate-3-phosphate (EPSP) to yield chorismate, which is the branch point compound that serves as the starting substrate for the three terminal pathways of aromatic amino acid biosynthesis. This reaction introduces a second double bond into the aromatic ring system. This Mycobacterium avium (strain 104) protein is Chorismate synthase.